The chain runs to 111 residues: Protein BEX3 (111 aa).

Residues Met-1–Asp-63 form a disordered region. Residues Glu-68–Leu-93 form an interaction with p75NTR/NGFR region. Residues Glu-68–Pro-111 form an interaction with 14-3-3 epsilon region. Positions Ile-77 to Arg-87 match the Nuclear export signal motif. Positions His-100 to His-104 are his cluster. Residue Cys-108 participates in Zn(2+) binding.

This sequence belongs to the BEX family. In terms of assembly, self-associates. Binds to the DEATH domain of p75NTR/NGFR. Interacts with 14-3-3 epsilon (YWHAE). Interacts with DIABLO/SMAC. Post-translationally, ubiquitinated. Degraded by the proteasome. Found in ovarian granulosa cells, testis, prostate and seminal vesicle tissue. High levels also detected in liver.

The protein localises to the nucleus. The protein resides in the cytoplasm. Its subcellular location is the cytosol. In terms of biological role, may be a signaling adapter molecule involved in NGFR/p75NTR-mediated apoptosis induced by NGF. Plays a role in zinc-triggered neuronal death. In absence of reductive stress, acts as a pseudosubstrate for the CRL2(FEM1B) complex: associates with FEM1B via zinc, thereby preventing association between FEM1B and its substrates. The protein is Protein BEX3 of Homo sapiens (Human).